The sequence spans 389 residues: Inactive serine/threonine-protein kinase ZRK12 (389 aa).

A Protein kinase domain is found at Ser-41–Ile-342. ATP-binding positions include Lys-47–Ser-55 and Lys-84. At Tyr-129 the chain carries Phosphotyrosine. Thr-214 is modified (phosphothreonine). Tyr-222 is modified (phosphotyrosine).

It belongs to the protein kinase superfamily. Ser/Thr protein kinase family.

In terms of biological role, together with RPP13L4/ZAR1, involved in the regulation of the ambient temperature-sensitive intersection of growth and immune response in the absence of pathogens. In Arabidopsis thaliana (Mouse-ear cress), this protein is Inactive serine/threonine-protein kinase ZRK12.